Here is a 234-residue protein sequence, read N- to C-terminus: Demethylmenaquinone methyltransferase (234 aa).

S-adenosyl-L-methionine is bound by residues Thr58, Asp79, and 106–107 (NA).

This sequence belongs to the class I-like SAM-binding methyltransferase superfamily. MenG/UbiE family.

It catalyses the reaction a 2-demethylmenaquinol + S-adenosyl-L-methionine = a menaquinol + S-adenosyl-L-homocysteine + H(+). It participates in quinol/quinone metabolism; menaquinone biosynthesis; menaquinol from 1,4-dihydroxy-2-naphthoate: step 2/2. Its function is as follows. Methyltransferase required for the conversion of demethylmenaquinol (DMKH2) to menaquinol (MKH2). The chain is Demethylmenaquinone methyltransferase from Bacillus pumilus (strain SAFR-032).